The following is a 228-amino-acid chain: Phosphoenolpyruvate guanylyltransferase (228 aa).

Phosphoenolpyruvate-binding residues include threonine 148, glycine 164, and serine 167.

It belongs to the CofC family.

The enzyme catalyses phosphoenolpyruvate + GTP + H(+) = enolpyruvoyl-2-diphospho-5'-guanosine + diphosphate. It participates in cofactor biosynthesis; coenzyme F420 biosynthesis. In terms of biological role, guanylyltransferase that catalyzes the activation of phosphoenolpyruvate (PEP) as enolpyruvoyl-2-diphospho-5'-guanosine, via the condensation of PEP with GTP. It is involved in the biosynthesis of coenzyme F420, a hydride carrier cofactor. This is Phosphoenolpyruvate guanylyltransferase from Thermomonospora curvata (strain ATCC 19995 / DSM 43183 / JCM 3096 / KCTC 9072 / NBRC 15933 / NCIMB 10081 / Henssen B9).